We begin with the raw amino-acid sequence, 198 residues long: Alkyl hydroperoxide reductase C (198 aa).

The region spanning 2–163 (TLVTQKAPNF…MIRMIDALNF (162 aa)) is the Thioredoxin domain. The Cysteine sulfenic acid (-SOH) intermediate role is filled by C50.

The protein belongs to the peroxiredoxin family. AhpC/Prx1 subfamily. Homodimer; disulfide-linked, upon oxidation. 5 homodimers assemble to form a ring-like decamer.

It localises to the cytoplasm. It catalyses the reaction a hydroperoxide + NADH + H(+) = an alcohol + NAD(+) + H2O. Functionally, thiol-specific peroxidase that catalyzes the reduction of hydrogen peroxide and organic hydroperoxides to water and alcohols, respectively. Plays a role in cell protection against oxidative stress by detoxifying peroxides. The chain is Alkyl hydroperoxide reductase C from Buchnera aphidicola subsp. Schizaphis graminum (strain Sg).